The following is a 250-amino-acid chain: NADH-quinone oxidoreductase subunit C (250 aa).

The disordered stretch occupies residues 193–250 (GMTPPLPGDEKADMPPIDDPMVTEGPEDTGAGARANAKAAEGTPADPPAMDDEEEDDA). The span at 222–236 (GAGARANAKAAEGTP) shows a compositional bias: low complexity. Over residues 241-250 (AMDDEEEDDA) the composition is skewed to acidic residues.

Belongs to the complex I 30 kDa subunit family. NDH-1 is composed of 14 different subunits. Subunits NuoB, C, D, E, F, and G constitute the peripheral sector of the complex.

The protein resides in the cell inner membrane. The catalysed reaction is a quinone + NADH + 5 H(+)(in) = a quinol + NAD(+) + 4 H(+)(out). NDH-1 shuttles electrons from NADH, via FMN and iron-sulfur (Fe-S) centers, to quinones in the respiratory chain. The immediate electron acceptor for the enzyme in this species is believed to be ubiquinone. Couples the redox reaction to proton translocation (for every two electrons transferred, four hydrogen ions are translocated across the cytoplasmic membrane), and thus conserves the redox energy in a proton gradient. This Erythrobacter litoralis (strain HTCC2594) protein is NADH-quinone oxidoreductase subunit C.